The following is a 305-amino-acid chain: GTP cyclohydrolase FolE2 (305 aa).

The protein belongs to the GTP cyclohydrolase IV family.

The enzyme catalyses GTP + H2O = 7,8-dihydroneopterin 3'-triphosphate + formate + H(+). The protein operates within cofactor biosynthesis; 7,8-dihydroneopterin triphosphate biosynthesis; 7,8-dihydroneopterin triphosphate from GTP: step 1/1. Its function is as follows. Converts GTP to 7,8-dihydroneopterin triphosphate. In Xanthomonas euvesicatoria pv. vesicatoria (strain 85-10) (Xanthomonas campestris pv. vesicatoria), this protein is GTP cyclohydrolase FolE2.